The primary structure comprises 692 residues: ATPase synthesis protein 25, mitochondrial (692 aa).

The N-terminal 73 residues, 1–73, are a transit peptide targeting the mitochondrion; that stretch reads MNRILSKGPR…DGNGNTHRTT (73 aa). Disordered regions lie at residues 44-83, 286-314, and 338-373; these read PRLRSEDSPSSSQPLKPDPNDGNGNTHRTTSTASSQHTPW, RQVSIDTKSDAPHEEVRASTPVQNSSSDH, and CRLLGPQTEDNQDDGLDDGLDMSPDSNSTGTDHLAA. The segment covering 65-81 has biased composition (polar residues); the sequence is GNGNTHRTTSTASSQHT. Residues 292 to 302 show a composition bias toward basic and acidic residues; that stretch reads TKSDAPHEEVR. The span at 347-357 shows a compositional bias: acidic residues; the sequence is DNQDDGLDDGL.

This sequence belongs to the ATP25 family.

Its subcellular location is the mitochondrion inner membrane. In terms of biological role, probable mitochondrial mRNA stabilization factor. This chain is ATPase synthesis protein 25, mitochondrial (atp25), found in Neosartorya fischeri (strain ATCC 1020 / DSM 3700 / CBS 544.65 / FGSC A1164 / JCM 1740 / NRRL 181 / WB 181) (Aspergillus fischerianus).